Reading from the N-terminus, the 385-residue chain is F-box only protein 4 (385 aa).

2 positions are modified to phosphoserine: S11 and S46. Residues 54-100 form the F-box domain; sequence TSALTRLPVDVQLYILSFLSPHDLCQLGSTDHYWNKTIRDPILWRYF.

Homodimer. Part of the SCF (SKP1-CUL1-F-box) E3 ubiquitin-protein ligase complex SCF(FBXO4) formed of CUL1, SKP1, RBX1 and FBXO4. Interacts with TERF1; this interaction is prevented in the presence of GNL3L. Identified in a complex with CRYAB and CCND1. Phosphorylation at Ser-11 varies during the cell cycle. It is low in resting cells and high in the S phase and the G2/M phase of the cell cycle. Phosphorylation is decreased during late G1 phase. Phosphorylation at Ser-11 is important for homodimerization and for optimal ubiquitin ligase activity towards CCND1.

The protein resides in the cytoplasm. Its pathway is protein modification; protein ubiquitination. In terms of biological role, substrate recognition component of a SCF (SKP1-CUL1-F-box protein) E3 ubiquitin-protein ligase complex that mediates the ubiquitination and subsequent proteasomal degradation of target proteins. Promotes ubiquitination of cyclin-D1 (CCND1) and its subsequent proteasomal degradation. However, it does not act as a major regulator of CCND1 stability during the G1/S transition. Recognizes TERF1 and promotes its ubiquitination together with UBE2D1. Promotes ubiquitination of FXR1 following phosphorylation of FXR1 by GSK3B, leading to FXR1 degradation by the proteasome. The polypeptide is F-box only protein 4 (Mus musculus (Mouse)).